The chain runs to 412 residues: MGKQQETILIIGAGISGLATSRLLTNNGIPNIVFEASTPDRSQGFAISLQEFGYSTLLAALGDLPLSSLIRAVAPDRQIGGTGWIDQALRDNRTGELLVAPDLTTTKQTIVRANRNALRHWIADCGEDELDVRYGHKLQSIKGKLGDVTAIFENGAKYKGSLIIAADGVNSTSRSQILPDVVPETIPLIHYHGEFQLSHSAFDELIRPHSGHSNILVGVGDSFNTPLSICNITKTRVHLDWSYSRTVKGENDILYRPNVQSEEAKQIPPALLEELDALNLAEPWKTILNSESLKTHRVFHWTTRCVYITQDDARRAGEQGVIFVGDSWHAMPIFGGEGGNHALLDGVELADAIAASTASSGNGDWDSVIKNYYGGAWKRSQEAVRRSTQRFFLLHRPATEWKEISEQKKKPA.

A signal peptide spans 1–21; it reads MGKQQETILIIGAGISGLATS. Glutamate 35 and alanine 46 together coordinate FAD. N-linked (GlcNAc...) asparagine glycosylation is present at asparagine 92. Arginine 119 provides a ligand contact to FAD. N-linked (GlcNAc...) asparagine glycans are attached at residues asparagine 170 and asparagine 231. Residues aspartate 326 and glycine 339 each contribute to the FAD site.

Belongs to the paxM FAD-dependent monooxygenase family. FAD is required as a cofactor.

It participates in secondary metabolite biosynthesis. Its function is as follows. FAD-dependent monooxygenase; part of the gene cluster that mediates the biosynthesis of neosartoricin B, a prenylated anthracenone that probably exhibits T-cell antiproliferative activity, suggestive of a physiological role as an immunosuppressive agent. The non-reducing polyketide synthase nscA probably synthesizes and cyclizes the decaketide backbone. The hydrolase nscB then mediates the product release through hydrolysis followed by spontaneous decarboxylation. The prenyltransferase nscD catalyzes the addition of the dimethylallyl group to the aromatic C5. The FAD-dependent monooxygenase nscC is then responsible for the stereospecific hydroxylation at C2. Neosartoricin B can be converted into two additional compounds neosartoricins C and D. Neosartoricin C is a spirocyclic compound that is cyclized through the attack of C3 hydroxyl on C14, followed by dehydration. On the other hand, neosartoricin D is a further cyclized compound in which attack of C2 on C14 in neosartoricin C results in the formation of the acetal-containing dioxabicyclo-octanone ring. Both of these compounds are novel and possibly represent related metabolites of the gene cluster. The protein is FAD-dependent monooxygenase nscC of Trichophyton tonsurans (strain CBS 112818) (Scalp ringworm fungus).